A 633-amino-acid chain; its full sequence is Extracellular metalloproteinase 3 (633 aa).

Positions 1–18 are cleaved as a signal peptide; the sequence is MHGLLLAGLLALPMNVLA. Residues 19-246 constitute a propeptide that is removed on maturation; it reads HPAEHHASNV…VHNVVDYVAS (228 aa). 2 N-linked (GlcNAc...) asparagine glycosylation sites follow: Asn232 and Asn410. His429 is a Zn(2+) binding site. The active site involves Glu430. His433 contacts Zn(2+). Asn480 and Asn622 each carry an N-linked (GlcNAc...) asparagine glycan.

The protein belongs to the peptidase M36 family. Zn(2+) serves as cofactor.

The protein localises to the secreted. Functionally, secreted metalloproteinase that allows assimilation of proteinaceous substrates and probably acts as a virulence factor. The chain is Extracellular metalloproteinase 3 (MEP3) from Arthroderma gypseum (strain ATCC MYA-4604 / CBS 118893) (Microsporum gypseum).